A 708-amino-acid chain; its full sequence is Lactotransferrin (708 aa).

The first 19 residues, M1–A19, serve as a signal peptide directing secretion. Transferrin-like domains follow at residues V25 to E352 and V364 to K693. Disulfide bonds link C28–C64 and C38–C55. D79 lines the Fe(3+) pocket. The active site involves K92. Y111 lines the Fe(3+) pocket. Intrachain disulfides connect C134–C217, C176–C192, C179–C202, C189–C200, and C250–C264. Hydrogencarbonate contacts are provided by R140, A142, and G143. Y211 provides a ligand contact to Fe(3+). A glycan (N-linked (GlcNAc...) (high mannose) asparagine) is linked at N252. H272 lines the Fe(3+) pocket. S278 acts as the Nucleophile in catalysis. Residue N300 is glycosylated (N-linked (GlcNAc...) asparagine). Disulfide bonds link C367–C399 and C377–C390. The N-linked (GlcNAc...) (complex) asparagine; alternate glycan is linked to N387. N387 carries an N-linked (GlcNAc...) (high mannose) asparagine; alternate glycan. N387 carries N-linked (GlcNAc...) (hybrid) asparagine; alternate glycosylation. Fe(3+)-binding residues include D414 and Y452. Intrachain disulfides connect C424–C703, C444–C666, C476–C551, C500–C694, C510–C524, C521–C534, C592–C606, and C644–C649. Residues T478, R482, A484, and G485 each coordinate hydrogencarbonate. A glycan (N-linked (GlcNAc...) (complex) asparagine; alternate) is linked at N495. Residue N495 is glycosylated (N-linked (GlcNAc...) (high mannose) asparagine; alternate). N495 carries an N-linked (GlcNAc...) (hybrid) asparagine; alternate glycan. Y545 is a binding site for Fe(3+). N-linked (GlcNAc...) (high mannose) asparagine glycosylation occurs at N564. Residue H614 participates in Fe(3+) binding.

Belongs to the transferrin family. Monomer. Found in a complex with LTF, CLU, EPPIN and SEMG1. Found in a complex with MPO and LTF; interacts directly with CP, allows Fe(3+) incorporation into LTF and activation of CP ferroxidase activity. Poly-N-acetyllactosaminic carbohydrate moiety seems to be needed for TLR4 activation.

The protein resides in the secreted. It localises to the cytoplasmic granule. Transferrins are iron binding transport proteins which can bind two Fe(3+) ions in association with the binding of an anion, usually bicarbonate. In terms of biological role, major iron-binding and multifunctional protein found in exocrine fluids such as breast milk and mucosal secretions. Has antimicrobial activity, which depends on the extracellular cation concentration. Antimicrobial properties include bacteriostasis, which is related to its ability to sequester free iron and thus inhibit microbial growth, as well as direct bactericidal properties leading to the release of lipopolysaccharides from the bacterial outer membrane. Can also prevent bacterial biofilm development in P.aeruginosa infection. Has weak antifungal activity against C.albicans. Has anabolic, differentiating and anti-apoptotic effects on osteoblasts and can also inhibit osteoclastogenesis, possibly playing a role in the regulation of bone growth. Promotes binding of species C adenoviruses to epithelial cells, promoting adenovirus infection. Can inhibit papillomavirus infections. Stimulates the TLR4 signaling pathway leading to NF-kappa-B activation and subsequent pro-inflammatory cytokine production while also interfering with the lipopolysaccharide (LPS)-stimulated TLR4 signaling. Inhibits neutrophil granulocyte migration to sites of apoptosis, when secreted by apoptotic cells. Stimulates VEGFA-mediated endothelial cell migration and proliferation. Binds heparin, chondroitin sulfate and possibly other glycosaminoglycans (GAGs). Also binds specifically to pneumococcal surface protein A (PspA), the lipid A portion of bacterial lipopolysaccharide (LPS), lysozyme and DNA. Its function is as follows. Lactoferricin binds to the bacterial surface and is crucial for the bactericidal functions. Has some antiviral activity against papillomavirus infection. N-terminal region shows strong antifungal activity against C.albicans. Contains two BBXB heparin-binding consensus sequences that appear to form the predominate functional GAG-binding site. Functionally, the lactotransferrin transferrin-like domain 1 functions as a serine protease of the peptidase S60 family that cuts arginine rich regions. This function contributes to the antimicrobial activity. Shows a preferential cleavage at -Arg-Ser-Arg-Arg-|- and -Arg-Arg-Ser-Arg-|-, and of Z-Phe-Arg-|-aminomethylcoumarin sites. In Capra hircus (Goat), this protein is Lactotransferrin (LTF).